Reading from the N-terminus, the 1055-residue chain is Auxin response factor 16 (1055 aa).

A DNA-binding region (TF-B3) is located at residues 127-229 (FCKTLTASDT…QLLLGIRRAT (103 aa)). Disordered stretches follow at residues 485-510 (PVMS…QQSS), 532-565 (QEHL…EQTS), 585-609 (SQLQ…PIAG), 701-720 (SDSI…LNHM), and 732-769 (SHSA…SRNL). 2 stretches are compositionally biased toward low complexity: residues 488–510 (SQHQ…QQSS) and 532–552 (QEHL…ASSL). Over residues 742-756 (PSSSTAPSTSRISPI) the composition is skewed to low complexity. Residues 757–769 (NSLSRANQGSRNL) are compositionally biased toward polar residues. In terms of domain architecture, PB1 spans 940–1024 (RTFTKVQKRG…KSIKILSAAE (85 aa)). The segment at 1034-1055 (LGGVPPQTQACSASDDANAWRG) is disordered.

Belongs to the ARF family. In terms of assembly, homodimers and heterodimers. As to expression, expressed in roots, culms, leaves and young panicles.

It localises to the nucleus. Its function is as follows. Auxin response factors (ARFs) are transcriptional factors that bind specifically to the DNA sequence 5'-TGTCTC-3' found in the auxin-responsive promoter elements (AuxREs). The protein is Auxin response factor 16 (ARF16) of Oryza sativa subsp. japonica (Rice).